The following is a 161-amino-acid chain: Nucleotide-binding protein HCH_04620 (161 aa).

This sequence belongs to the YajQ family.

Functionally, nucleotide-binding protein. The polypeptide is Nucleotide-binding protein HCH_04620 (Hahella chejuensis (strain KCTC 2396)).